The primary structure comprises 428 residues: GTPase Obg (428 aa).

In terms of domain architecture, Obg spans Met1–Leu158. The disordered stretch occupies residues Lys118–Pro145. Positions Ala159–Glu329 constitute an OBG-type G domain. GTP contacts are provided by residues Gly165–Ser172, Phe190–Val194, Asp212–Gly215, Asn282–Asp285, and Ser310–Ile312. The Mg(2+) site is built by Ser172 and Thr192. The OCT domain maps to Arg350 to Asp428.

Belongs to the TRAFAC class OBG-HflX-like GTPase superfamily. OBG GTPase family. In terms of assembly, monomer. It depends on Mg(2+) as a cofactor.

It is found in the cytoplasm. An essential GTPase which binds GTP, GDP and possibly (p)ppGpp with moderate affinity, with high nucleotide exchange rates and a fairly low GTP hydrolysis rate. Plays a role in control of the cell cycle, stress response, ribosome biogenesis and in those bacteria that undergo differentiation, in morphogenesis control. The chain is GTPase Obg from Bacillus pumilus (strain SAFR-032).